Reading from the N-terminus, the 382-residue chain is UDP-4-amino-4-deoxy-L-arabinose--oxoglutarate aminotransferase (382 aa).

An N6-(pyridoxal phosphate)lysine modification is found at K183.

This sequence belongs to the DegT/DnrJ/EryC1 family. ArnB subfamily. As to quaternary structure, homodimer. Pyridoxal 5'-phosphate is required as a cofactor.

The enzyme catalyses UDP-4-amino-4-deoxy-beta-L-arabinose + 2-oxoglutarate = UDP-beta-L-threo-pentopyranos-4-ulose + L-glutamate. The protein operates within nucleotide-sugar biosynthesis; UDP-4-deoxy-4-formamido-beta-L-arabinose biosynthesis; UDP-4-deoxy-4-formamido-beta-L-arabinose from UDP-alpha-D-glucuronate: step 2/3. It functions in the pathway bacterial outer membrane biogenesis; lipopolysaccharide biosynthesis. Its function is as follows. Catalyzes the conversion of UDP-4-keto-arabinose (UDP-Ara4O) to UDP-4-amino-4-deoxy-L-arabinose (UDP-L-Ara4N). The modified arabinose is attached to lipid A and is required for resistance to polymyxin and cationic antimicrobial peptides. The sequence is that of UDP-4-amino-4-deoxy-L-arabinose--oxoglutarate aminotransferase from Pseudomonas aeruginosa (strain UCBPP-PA14).